The sequence spans 439 residues: ATP-dependent RNA helicase RhlB (439 aa).

A Q motif motif is present at residues 9-37; that stretch reads QKFADLPLHPEVKQALAENGFEFCTPIQA. The Helicase ATP-binding domain maps to 40–219; sequence LPVLLQSKDI…YDHMNDPVKV (180 aa). 53 to 60 lines the ATP pocket; that stretch reads AQTGTGKT. Positions 165 to 168 match the DEAD box motif; it reads DEAD. The region spanning 243–390 is the Helicase C-terminal domain; that stretch reads KMRLLLTLIE…VSNYDRDALL (148 aa). The segment at 395–439 is disordered; it reads SPVKIHRKHPAGARNLRERSGAGRTPGAHRSGGRPPRHDRTRRQP. Residues 425–439 are compositionally biased toward basic residues; it reads SGGRPPRHDRTRRQP.

This sequence belongs to the DEAD box helicase family. RhlB subfamily. In terms of assembly, component of the RNA degradosome, which is a multiprotein complex involved in RNA processing and mRNA degradation.

Its subcellular location is the cytoplasm. The enzyme catalyses ATP + H2O = ADP + phosphate + H(+). In terms of biological role, DEAD-box RNA helicase involved in RNA degradation. Has RNA-dependent ATPase activity and unwinds double-stranded RNA. This Shewanella oneidensis (strain ATCC 700550 / JCM 31522 / CIP 106686 / LMG 19005 / NCIMB 14063 / MR-1) protein is ATP-dependent RNA helicase RhlB.